Reading from the N-terminus, the 135-residue chain is RxLR effector protein Avr10 (135 aa).

The N-terminal stretch at Met1–Ala19 is a signal peptide. The segment covering Gly34 to Lys43 has biased composition (polar residues). A disordered region spans residues Gly34–Ala64. Residues Arg44–Arg63 carry the RxLR-dEER motif. Residues Leu46–Ala55 show a composition bias toward basic and acidic residues.

It belongs to the RxLR effector family.

It localises to the secreted. The protein localises to the host nucleus. Its subcellular location is the host cytoplasm. Functionally, secreted effector that acts as an elicitor of hypersensitive response (HR) specifically on plants carrying defense protein R10. Enhances P.infestans colonization of Nicotiana benthamiana leaves. This is RxLR effector protein Avr10 from Phytophthora infestans (strain T30-4) (Potato late blight agent).